Consider the following 592-residue polypeptide: ATP-binding protein Uup (592 aa).

2 consecutive ABC transporter domains span residues 1–221 (MPLI…RIEK) and 289–516 (FKLK…KSNI). ATP-binding positions include 36 to 43 (GKNGAGKS) and 321 to 328 (GNNGSGKS). A coiled-coil region spans residues 516–550 (ISFLKTKQNQVKKELKKVLNEIEKIENSIKTLKIQ). Residues 518–592 (FLKTKQNQVK…IYWENLEKKL (75 aa)) form a C-terminal domain (CTD), binds DNA region.

It belongs to the ABC transporter superfamily. ABCF family. Uup subfamily.

The protein localises to the cytoplasm. The catalysed reaction is ATP + H2O = ADP + phosphate + H(+). Probably plays a role in ribosome assembly or function. May be involved in resolution of branched DNA intermediates that result from template switching in postreplication gaps. Binds DNA and has ATPase activity. In Buchnera aphidicola subsp. Schizaphis graminum (strain Sg), this protein is ATP-binding protein Uup.